Reading from the N-terminus, the 992-residue chain is P3N-PIPO polyprotein (992 aa).

A Peptidase S30 domain is found at T168 to Y308. Residues H221, E230, and S262 each act as for P1 proteinase activity in the active site. Positions K361–C364 match the Involved in interaction with stylet and aphid transmission motif. An Involved in virions binding and aphid transmission motif is present at residues P617 to K619. One can recognise a Peptidase C6 domain in the interval M643–G765. Residues C651 and H724 each act as for helper component proteinase activity in the active site.

The protein belongs to the potyviridae P3N-PIPO polyprotein family. As to quaternary structure, interacts (via PIPO domain) with host PCaP1 protein; this interaction may help to anchor the movement complex to the plasma membrane from which the complex could move to the plasmodesmata. Potyviral RNA is expressed as two polyproteins which undergo post-translational proteolytic processing. Genome polyprotein is processed by NIa-pro, P1 and HC-pro proteinases resulting in the production of at least ten individual proteins. P3N-PIPO is cleaved by P1 and HC-pro proteinases resulting in the production of three individual proteins. The P1 proteinase and the HC-pro cleave only their respective C-termini autocatalytically.

It localises to the host cell junction. It is found in the host plasmodesma. The catalysed reaction is Hydrolyzes a Gly-|-Gly bond at its own C-terminus, commonly in the sequence -Tyr-Xaa-Val-Gly-|-Gly, in the processing of the potyviral polyprotein.. Functionally, required for aphid transmission and also has proteolytic activity. Only cleaves a Gly-Gly dipeptide at its own C-terminus. Interacts with virions and aphid stylets. Acts as a suppressor of RNA-mediated gene silencing, also known as post-transcriptional gene silencing (PTGS), a mechanism of plant viral defense that limits the accumulation of viral RNAs. May have RNA-binding activity. In terms of biological role, allows efficient cell to cell propagation, by bypassing the host cell wall barrier. Transports viral genome to neighboring plant cells directly through plasmosdesmata, without any budding. The polypeptide is P3N-PIPO polyprotein (Glycine max (Soybean)).